The sequence spans 287 residues: Phosphatidylserine decarboxylase proenzyme (287 aa).

Residues D90, H147, and S253 each act as charge relay system; for autoendoproteolytic cleavage activity in the active site. S253 serves as the catalytic Schiff-base intermediate with substrate; via pyruvic acid; for decarboxylase activity. S253 is subject to Pyruvic acid (Ser); by autocatalysis.

Belongs to the phosphatidylserine decarboxylase family. PSD-B subfamily. Prokaryotic type I sub-subfamily. As to quaternary structure, heterodimer of a large membrane-associated beta subunit and a small pyruvoyl-containing alpha subunit. Pyruvate is required as a cofactor. In terms of processing, is synthesized initially as an inactive proenzyme. Formation of the active enzyme involves a self-maturation process in which the active site pyruvoyl group is generated from an internal serine residue via an autocatalytic post-translational modification. Two non-identical subunits are generated from the proenzyme in this reaction, and the pyruvate is formed at the N-terminus of the alpha chain, which is derived from the carboxyl end of the proenzyme. The autoendoproteolytic cleavage occurs by a canonical serine protease mechanism, in which the side chain hydroxyl group of the serine supplies its oxygen atom to form the C-terminus of the beta chain, while the remainder of the serine residue undergoes an oxidative deamination to produce ammonia and the pyruvoyl prosthetic group on the alpha chain. During this reaction, the Ser that is part of the protease active site of the proenzyme becomes the pyruvoyl prosthetic group, which constitutes an essential element of the active site of the mature decarboxylase.

The protein resides in the cell membrane. It catalyses the reaction a 1,2-diacyl-sn-glycero-3-phospho-L-serine + H(+) = a 1,2-diacyl-sn-glycero-3-phosphoethanolamine + CO2. It participates in phospholipid metabolism; phosphatidylethanolamine biosynthesis; phosphatidylethanolamine from CDP-diacylglycerol: step 2/2. In terms of biological role, catalyzes the formation of phosphatidylethanolamine (PtdEtn) from phosphatidylserine (PtdSer). The protein is Phosphatidylserine decarboxylase proenzyme of Aliivibrio fischeri (strain ATCC 700601 / ES114) (Vibrio fischeri).